The following is a 198-amino-acid chain: MARCKS-related protein (198 aa).

Positions 1 to 198 (MGSQSSKAPR…DPAPASEQNE (198 aa)) are disordered. Glycine 2 is lipidated: N-myristoyl glycine. Threonine 14 is modified (phosphothreonine). Residues serine 22, serine 36, serine 41, and serine 48 each carry the phosphoserine modification. A compositionally biased stretch (low complexity) spans 53-62 (GTEEAAGATG). Serine 71 bears the Phosphoserine mark. The span at 76–85 (AKGEVPPKET) shows a compositional bias: basic and acidic residues. At threonine 85 the chain carries Phosphothreonine. Positions 86–98 (PKKKKKFSFKKPF) are enriched in basic residues. Positions 87 to 110 (KKKKKFSFKKPFKLSGLSFKRNRK) are effector domain involved in lipid-binding and calmodulin-binding. A phosphoserine; by PKC mark is found at serine 93, serine 101, and serine 104. Serine 119 bears the Phosphoserine mark. Serine 120 carries the post-translational modification Phosphoserine; by MAPK8. Serine 132 carries the post-translational modification Phosphoserine. Threonine 148 is subject to Phosphothreonine; by MAPK8. Phosphoserine occurs at positions 151 and 162. A compositionally biased stretch (low complexity) spans 156-167 (AKGAEASAAAKG). The residue at position 170 (threonine 170) is a Phosphothreonine. Position 182 is a phosphothreonine; by MAPK8 (threonine 182).

This sequence belongs to the MARCKS family. As to quaternary structure, binds to filamentous actin (F-actin), but not to monomeric G-actin, independently of its phosphorylation status. Interacts with calmodulin. Phosphorylated. Phosphorylation at Ser-120 and Thr-182 is non-redundantly catalyzed by MAPK8 in vivo. Phosphorylation at Thr-148 is preferentially catalyzed by MAPK8 in vivo, but this modification can also be catalyzed by other kinases in the absence of MAPK8. May be phosphorylated by protein kinase C, which disrupts the interaction with calmodulin.

It localises to the cytoplasm. Its subcellular location is the cytoskeleton. The protein resides in the cell membrane. In terms of biological role, controls cell movement by regulating actin cytoskeleton homeostasis and filopodium and lamellipodium formation. When unphosphorylated, induces cell migration. When phosphorylated by MAPK8, induces actin bundles formation and stabilization, thereby reducing actin plasticity, hence restricting cell movement, including neuronal migration. May be involved in coupling the protein kinase C and calmodulin signal transduction systems. The chain is MARCKS-related protein (MARCKSL1) from Bos taurus (Bovine).